Reading from the N-terminus, the 301-residue chain is GTPase Era (301 aa).

The Era-type G domain occupies 4-173 (KAGFVALIGK…LECISKHLSP (170 aa)). The tract at residues 12 to 19 (GKPNAGKS) is G1. 12–19 (GKPNAGKS) is a GTP binding site. Residues 38-42 (NATRK) form a G2 region. Positions 64-67 (DTPG) are G3. Residues 64–68 (DTPGL) and 122–125 (SKID) contribute to the GTP site. The tract at residues 122–125 (SKID) is G4. The interval 152–154 (LSA) is G5. In terms of domain architecture, KH type-2 spans 204 to 280 (LSDEIPYESD…FLNLQVIAQK (77 aa)).

It belongs to the TRAFAC class TrmE-Era-EngA-EngB-Septin-like GTPase superfamily. Era GTPase family. In terms of assembly, monomer.

Its subcellular location is the cytoplasm. The protein localises to the cell inner membrane. In terms of biological role, an essential GTPase that binds both GDP and GTP, with rapid nucleotide exchange. Plays a role in 16S rRNA processing and 30S ribosomal subunit biogenesis and possibly also in cell cycle regulation and energy metabolism. The sequence is that of GTPase Era from Helicobacter pylori (strain Shi470).